The primary structure comprises 84 residues: Large ribosomal subunit protein eL34 (84 aa).

This sequence belongs to the eukaryotic ribosomal protein eL34 family.

The polypeptide is Large ribosomal subunit protein eL34 (ribL34e) (Pyrobaculum aerophilum (strain ATCC 51768 / DSM 7523 / JCM 9630 / CIP 104966 / NBRC 100827 / IM2)).